Reading from the N-terminus, the 195-residue chain is Adenylate kinase (195 aa).

10-15 (GSGKGT) lines the ATP pocket. Residues 30–59 (STGDILRAERAAGTLLGQQAQSYMDRGELV) are NMP. Residues Thr-31, Arg-36, 57-59 (ELV), 85-88 (GFPR), and Gln-92 each bind AMP. Positions 126 to 140 (NRAKQAVNGQQRSDD) are LID. Arg-127 contacts ATP. The AMP site is built by Arg-137 and Arg-148. An ATP-binding site is contributed by Arg-176.

It belongs to the adenylate kinase family. Monomer.

It localises to the cytoplasm. It catalyses the reaction AMP + ATP = 2 ADP. The protein operates within purine metabolism; AMP biosynthesis via salvage pathway; AMP from ADP: step 1/1. Catalyzes the reversible transfer of the terminal phosphate group between ATP and AMP. Plays an important role in cellular energy homeostasis and in adenine nucleotide metabolism. The protein is Adenylate kinase of Thermosynechococcus vestitus (strain NIES-2133 / IAM M-273 / BP-1).